A 1012-amino-acid polypeptide reads, in one-letter code: Roundabout homolog 4 (1012 aa).

The signal sequence occupies residues 1–27 (MGSGGTGLLGTEWPLPLLLLFIMGGEA). Ig-like C2-type domains lie at 32-132 (PQIL…ARLS) and 138-225 (EDFQ…ARVS). Intrachain disulfides connect Cys53/Cys115 and Cys159/Cys208. Residues Asn201 and Asn247 are each glycosylated (N-linked (GlcNAc...) asparagine). 2 consecutive Fibronectin type-III domains span residues 249-346 (TLLN…LPEQ) and 348-443 (PSAP…LEQA). Residues Asn361, Asn390, and Asn397 are each glycosylated (N-linked (GlcNAc...) asparagine). 2 disordered regions span residues 533 to 553 (TSGSRDLSSSSSLSSRLGLDP) and 586 to 616 (LIAEQPSSPPVRPSPKTPAARRFPSKLAGTS). The segment covering 534 to 550 (SGSRDLSSSSSLSSRLG) has biased composition (low complexity). Residues 592-601 (SSPPVRPSPK) are compositionally biased toward pro residues. N-linked (GlcNAc...) asparagine glycans are attached at residues Asn681 and Asn713. The interval 711–801 (HRNSSELASR…LEEEEDQDSV (91 aa)) is disordered. Residues 745-759 (LQAPSSDPLPAAPLS) show a composition bias toward low complexity. The segment covering 760–771 (VLNSSRPSSPQA) has biased composition (polar residues). Asn762 and Asn783 each carry an N-linked (GlcNAc...) asparagine glycan. Low complexity predominate over residues 772–791 (SFLSCPSPSSSNLSSSSLSS). Phosphoserine occurs at positions 814 and 947. The interval 980-1012 (RLGRGLPPWPPDSRASSQRSWLTGAVPKAGDSS) is disordered.

It belongs to the immunoglobulin superfamily. ROBO family. In terms of assembly, interacts with SLIT2 and ENAH. In terms of tissue distribution, expressed specifically in embryo and adult vascular endothelium.

Receptor for Slit proteins, at least for SLIT2, and seems to be involved in angiogenesis and vascular patterning. May mediate the inhibition of primary endothelial cell migration by Slit proteins. Involved in the maintenance of endothelial barrier organization and function. This Mus musculus (Mouse) protein is Roundabout homolog 4 (Robo4).